The following is a 1756-amino-acid chain: Transposon Ty1-BR Gag-Pol polyprotein (1756 aa).

Composition is skewed to polar residues over residues 1–10 (MESQQLSNYP), 48–60 (TKAN…TPAS), and 127–152 (QSQF…GNTF). Disordered stretches follow at residues 1–93 (MESQ…MMTQ), 126–173 (PQSQ…RPPP), and 352–421 (GSRN…SKST). Positions 153–165 (TDSSSADSDMTST) are enriched in low complexity. Residues 299–401 (NNGIHINNKV…NSKSKTARAH (103 aa)) are RNA-binding. Residues 402–418 (NVSTSNNSPSTDNDSIS) show a composition bias toward low complexity. Position 416 is a phosphoserine (S416). Catalysis depends on D461, which acts as the For protease activity; shared with dimeric partner. Positions 583–640 (NVHTSESTRKYPYPFIHRMLAHANAQTIRYSLKNNTITYFNESDVDWSSAIDYQCPDC) are integrase-type zinc finger-like. Residues 660–835 (NSYEPFQYLH…AGLDISTLLP (176 aa)) enclose the Integrase catalytic domain. The Mg(2+) site is built by D671 and D736. Disordered stretches follow at residues 956 to 1088 (SKAV…TEKR) and 1142 to 1173 (PTEL…SNAY). Residues 960–969 (SPTDSTPPST) show a composition bias toward low complexity. 2 stretches are compositionally biased toward polar residues: residues 1005–1017 (STPQ…STDS) and 1031–1043 (MSQS…SYAS). Positions 1044-1053 (KSKDFRHSDS) are enriched in basic and acidic residues. The span at 1054–1082 (YSDNETNHTNVPISSTGGTNNKTVPQTSE) shows a compositional bias: polar residues. Positions 1179–1213 (KKRSLEDNETEIKVSRDTWNTKNMRSLEPPRSKKR) match the Bipartite nuclear localization signal motif. A Reverse transcriptase Ty1/copia-type domain is found at 1339 to 1477 (NNYYITQLDI…DILGLEIKYQ (139 aa)). Mg(2+)-binding residues include D1347, D1428, D1429, D1611, E1653, and D1686. One can recognise an RNase H Ty1/copia-type domain in the interval 1611–1753 (DASYGNQPYY…IKTFKLLTNK (143 aa)).

The capsid protein forms a homotrimer, from which the VLPs are assembled. The protease is a homodimer, whose active site consists of two apposed aspartic acid residues. Initially, virus-like particles (VLPs) are composed of the structural unprocessed proteins Gag and Gag-Pol, and also contain the host initiator methionine tRNA (tRNA(i)-Met) which serves as a primer for minus-strand DNA synthesis, and a dimer of genomic Ty RNA. Processing of the polyproteins occurs within the particle and proceeds by an ordered pathway, called maturation. First, the protease (PR) is released by autocatalytic cleavage of the Gag-Pol polyprotein yielding capsid protein p45 and a Pol-p154 precursor protein. This cleavage is a prerequisite for subsequent processing of Pol-p154 at the remaining sites to release the mature structural and catalytic proteins. Maturation takes place prior to the RT reaction and is required to produce transposition-competent VLPs.

The protein resides in the cytoplasm. The protein localises to the nucleus. It carries out the reaction DNA(n) + a 2'-deoxyribonucleoside 5'-triphosphate = DNA(n+1) + diphosphate. It catalyses the reaction Endonucleolytic cleavage to 5'-phosphomonoester.. In terms of biological role, capsid protein (CA) is the structural component of the virus-like particle (VLP), forming the shell that encapsulates the retrotransposons dimeric RNA genome. The particles are assembled from trimer-clustered units and there are holes in the capsid shells that allow for the diffusion of macromolecules. CA also has nucleocapsid-like chaperone activity, promoting primer tRNA(i)-Met annealing to the multipartite primer-binding site (PBS), dimerization of Ty1 RNA and initiation of reverse transcription. Functionally, the aspartyl protease (PR) mediates the proteolytic cleavages of the Gag and Gag-Pol polyproteins after assembly of the VLP. Reverse transcriptase/ribonuclease H (RT) is a multifunctional enzyme that catalyzes the conversion of the retro-elements RNA genome into dsDNA within the VLP. The enzyme displays a DNA polymerase activity that can copy either DNA or RNA templates, and a ribonuclease H (RNase H) activity that cleaves the RNA strand of RNA-DNA heteroduplexes during plus-strand synthesis and hydrolyzes RNA primers. The conversion leads to a linear dsDNA copy of the retrotransposon that includes long terminal repeats (LTRs) at both ends. Its function is as follows. Integrase (IN) targets the VLP to the nucleus, where a subparticle preintegration complex (PIC) containing at least integrase and the newly synthesized dsDNA copy of the retrotransposon must transit the nuclear membrane. Once in the nucleus, integrase performs the integration of the dsDNA into the host genome. The protein is Transposon Ty1-BR Gag-Pol polyprotein (TY1B-BR) of Saccharomyces cerevisiae (strain ATCC 204508 / S288c) (Baker's yeast).